Here is a 332-residue protein sequence, read N- to C-terminus: NADH-quinone oxidoreductase subunit H (332 aa).

8 helical membrane-spanning segments follow: residues 11–31, 77–97, 110–130, 156–176, 182–202, 240–260, 268–288, and 307–327; these read TYKI…IVWL, VIFI…WAVI, VGVL…IMGG, IGVI…NDII, LWFI…ALAE, NILL…LSPI, IPGA…FALV, and IFLP…FYFN.

It belongs to the complex I subunit 1 family. As to quaternary structure, NDH-1 is composed of 14 different subunits. Subunits NuoA, H, J, K, L, M, N constitute the membrane sector of the complex.

The protein resides in the cell inner membrane. It catalyses the reaction a quinone + NADH + 5 H(+)(in) = a quinol + NAD(+) + 4 H(+)(out). Its function is as follows. NDH-1 shuttles electrons from NADH, via FMN and iron-sulfur (Fe-S) centers, to quinones in the respiratory chain. The immediate electron acceptor for the enzyme in this species is believed to be ubiquinone. Couples the redox reaction to proton translocation (for every two electrons transferred, four hydrogen ions are translocated across the cytoplasmic membrane), and thus conserves the redox energy in a proton gradient. This subunit may bind ubiquinone. This chain is NADH-quinone oxidoreductase subunit H, found in Pelagibacter ubique (strain HTCC1062).